Consider the following 428-residue polypeptide: Aspartate--tRNA(Asp) ligase (428 aa).

An L-aspartate-binding site is contributed by glutamate 166. Residues 188–191 (QLYK) are aspartate. Arginine 210 lines the L-aspartate pocket. ATP is bound by residues 210–212 (RAE), 218–220 (RHL), and glutamate 351. The Mg(2+) site is built by glutamate 351 and serine 354. L-aspartate-binding residues include serine 354 and arginine 358. ATP is bound at residue 399-402 (GLER).

It belongs to the class-II aminoacyl-tRNA synthetase family. Type 2 subfamily. As to quaternary structure, homodimer. Mg(2+) serves as cofactor.

It localises to the cytoplasm. The catalysed reaction is tRNA(Asp) + L-aspartate + ATP = L-aspartyl-tRNA(Asp) + AMP + diphosphate. Its function is as follows. Catalyzes the attachment of L-aspartate to tRNA(Asp) in a two-step reaction: L-aspartate is first activated by ATP to form Asp-AMP and then transferred to the acceptor end of tRNA(Asp). In Thermoplasma volcanium (strain ATCC 51530 / DSM 4299 / JCM 9571 / NBRC 15438 / GSS1), this protein is Aspartate--tRNA(Asp) ligase.